We begin with the raw amino-acid sequence, 328 residues long: uncharacterized protein (328 aa).

Residues 3 to 126 (RVKIGEFKFG…EVIPQVLCTG (124 aa)) form the Bro-N domain.

This is an uncharacterized protein from Autographa californica nuclear polyhedrosis virus (AcMNPV).